Consider the following 500-residue polypeptide: Trehalose-6-phosphate synthase (500 aa).

A D-glucose 6-phosphate-binding site is contributed by Arg28. 48–49 (GG) provides a ligand contact to UDP-alpha-D-glucose. Residues Tyr104 and Asp158 each contribute to the D-glucose 6-phosphate site. Residues Arg300 and Lys305 each coordinate UDP-alpha-D-glucose. Arg338 is a binding site for D-glucose 6-phosphate. 403–407 (LVAKE) contacts UDP-alpha-D-glucose.

This sequence belongs to the glycosyltransferase 20 family. As to quaternary structure, homotetramer.

The enzyme catalyses ADP-alpha-D-glucose + D-glucose 6-phosphate = alpha,alpha-trehalose 6-phosphate + ADP + H(+). The catalysed reaction is CDP-alpha-D-glucose + D-glucose 6-phosphate = alpha,alpha-trehalose 6-phosphate + CDP + H(+). It catalyses the reaction GDP-alpha-D-glucose + D-glucose 6-phosphate = alpha,alpha-trehalose 6-phosphate + GDP + H(+). It carries out the reaction TDP-alpha-D-glucose + D-glucose 6-phosphate = 5-methyl-UDP + alpha,alpha-trehalose 6-phosphate + H(+). The enzyme catalyses D-glucose 6-phosphate + UDP-alpha-D-glucose = alpha,alpha-trehalose 6-phosphate + UDP + H(+). It functions in the pathway glycan biosynthesis; trehalose biosynthesis. Its function is as follows. Probably involved in the osmoprotection via the biosynthesis of trehalose and in the production of glycogen and alpha-glucan via the TreS-Pep2 branch involved in the biosynthesis of maltose-1-phosphate (M1P). Catalyzes the transfer of glucose from UDP-glucose (UDP-Glc) to D-glucose 6-phosphate (Glc-6-P) to form trehalose-6-phosphate. Probably also able to use ADP-Glc, CDP-Glc, GDP-Glc and TDP-Glc as glucosyl donors. In Mycobacterium marinum (strain ATCC BAA-535 / M), this protein is Trehalose-6-phosphate synthase.